The chain runs to 700 residues: Glycine--tRNA ligase beta subunit (700 aa).

The protein belongs to the class-II aminoacyl-tRNA synthetase family. As to quaternary structure, tetramer of two alpha and two beta subunits.

It is found in the cytoplasm. The catalysed reaction is tRNA(Gly) + glycine + ATP = glycyl-tRNA(Gly) + AMP + diphosphate. This chain is Glycine--tRNA ligase beta subunit, found in Magnetococcus marinus (strain ATCC BAA-1437 / JCM 17883 / MC-1).